Consider the following 78-residue polypeptide: MSKICQVTGKKPVVGNNVSHSHRKTRRRFLPNLQTHRFWVENENRFVKLRLSTSGMRIIDKNGIESVLAEMRARGEKV.

This sequence belongs to the bacterial ribosomal protein bL28 family.

This Hydrogenovibrio crunogenus (strain DSM 25203 / XCL-2) (Thiomicrospira crunogena) protein is Large ribosomal subunit protein bL28.